The primary structure comprises 130 residues: Glycine cleavage system H protein (130 aa).

Residues 22–103 enclose the Lipoyl-binding domain; the sequence is QAWIGISDYA…PYANYIVVVA (82 aa). K63 is modified (N6-lipoyllysine).

Belongs to the GcvH family. The glycine cleavage system is composed of four proteins: P, T, L and H. (R)-lipoate is required as a cofactor.

Its function is as follows. The glycine cleavage system catalyzes the degradation of glycine. The H protein shuttles the methylamine group of glycine from the P protein to the T protein. The sequence is that of Glycine cleavage system H protein from Syntrophomonas wolfei subsp. wolfei (strain DSM 2245B / Goettingen).